The chain runs to 602 residues: mRNA-decapping enzyme 1A (602 aa).

Serine 82 is modified (phosphoserine). Over residues 152 to 161 (RSQQAARDKQ) the composition is skewed to basic and acidic residues. Disordered stretches follow at residues 152–174 (RSQQAARDKQSPSQANGCSDQRP), 191–234 (NQMG…PSGH), and 267–291 (GDASQKEPSSFLPFPFEQSGGAPQS). 3 positions are modified to phosphoserine: serine 162, serine 199, and serine 200. Polar residues predominate over residues 193 to 229 (MGGSNISSPGLQPSTQLSNLGSTETLEETPSGSQDKS). Phosphoserine occurs at positions 335 and 339. Phosphothreonine is present on threonine 367. Serine 372 is subject to Phosphoserine. An Asymmetric dimethylarginine modification is found at arginine 395. Threonine 420 is subject to Phosphothreonine. A phosphoserine mark is found at serine 441, serine 542, serine 543, and serine 545. Residues threonine 548 and threonine 551 each carry the phosphothreonine modification.

This sequence belongs to the DCP1 family. Forms a complex with EDC3, DCP2, DDX6 and EDC4/HEDLS, within this complex directly interacts with EDC3. Part of a cytoplasmic complex containing proteins involved in mRNA decay, including XRN1 and LSM1. Interacts with DCP1B. Interacts with DCP2. Interacts with DDX17 in an RNA-independent manner. Interacts with PNRC2. Interacts with SMAD4. Interacts with UPF1. Interacts with ZC3HAV1. Interacts with ZFP36L1. Interacts with NBDY. Interacts with DHX34; the interaction is RNA-independent. As to expression, ubiquitous, with highest expression in the spleen and testis (at protein level).

Its subcellular location is the cytoplasm. The protein localises to the P-body. The protein resides in the nucleus. It carries out the reaction a 5'-end (N(7)-methyl 5'-triphosphoguanosine)-ribonucleoside in mRNA + H2O = N(7)-methyl-GDP + a 5'-end phospho-ribonucleoside in mRNA + 2 H(+). Functionally, necessary for the degradation of mRNAs, both in normal mRNA turnover and in nonsense-mediated mRNA decay. Removes the 7-methyl guanine cap structure from mRNA molecules, yielding a 5'-phosphorylated mRNA fragment and 7m-GDP. Contributes to the transactivation of target genes after stimulation by TGFB1. Essential for embryonic development. The sequence is that of mRNA-decapping enzyme 1A (Dcp1a) from Mus musculus (Mouse).